The chain runs to 360 residues: Squamosa promoter-binding-like protein 7 (360 aa).

Residues 74-89 (AQGSGGGGGGGGGGSA) are compositionally biased toward gly residues. A disordered region spans residues 74 to 98 (AQGSGGGGGGGGGGSADQGKRKEKA). The SBP-type zinc finger occupies 105 to 182 (VPRCQVEGCD…AGHNERRRRS (78 aa)). Cysteine 108, cysteine 113, cysteine 130, histidine 133, cysteine 149, cysteine 152, histidine 156, and cysteine 168 together coordinate Zn(2+). Residues 165 to 181 (KKSCRRRLAGHNERRRR) carry the Bipartite nuclear localization signal motif. The segment covering 172-182 (LAGHNERRRRS) has biased composition (basic residues). Disordered regions lie at residues 172–196 (LAGH…AHPH), 261–306 (FFSD…HEHQ), and 320–360 (AAGG…ARVV).

Expressed in young panicles.

The protein localises to the nucleus. Its function is as follows. Trans-acting factor that binds specifically to the consensus nucleotide sequence 5'-TNCGTACAA-3'. May be involved in panicle development. This Oryza sativa subsp. indica (Rice) protein is Squamosa promoter-binding-like protein 7 (SPL7).